The chain runs to 427 residues: Glutamate-1-semialdehyde 2,1-aminomutase (427 aa).

Lysine 264 is subject to N6-(pyridoxal phosphate)lysine.

Belongs to the class-III pyridoxal-phosphate-dependent aminotransferase family. HemL subfamily. In terms of assembly, homodimer. The cofactor is pyridoxal 5'-phosphate.

It is found in the cytoplasm. The enzyme catalyses (S)-4-amino-5-oxopentanoate = 5-aminolevulinate. It functions in the pathway porphyrin-containing compound metabolism; protoporphyrin-IX biosynthesis; 5-aminolevulinate from L-glutamyl-tRNA(Glu): step 2/2. This is Glutamate-1-semialdehyde 2,1-aminomutase from Campylobacter concisus (strain 13826).